A 561-amino-acid polypeptide reads, in one-letter code: MEEFKNLKEHYENIGKNINMRKEFESNYGATRFKDFSKEVNISKQVGTILLDYSKNRINKETMDLLFELARASKVEEMRNSMFQGEKINITEDRAVLHTALRNRDPSAVIKVDGENVIPSVRKVLDKMRSFSERVRSGQWKGYTGKTITDVVNIGIGGSDLGPVMVTQALKNYANDKVMRAHFVSNIDGTHLAETVKHLCPETTLFIVASKTFTTQETITNAQSARSWFLEKIGGSSVSADVQKHAIGQHFVALSTNEQEVTKFGILKENMFEFWDWVGGRYSVWSAIGLSVALYVGMDHFESFLEGAYHMDQHFLNTPLELNLPVIMGLLGVWYNNFFGCQTQAILPYDQYLSRFPAYFQQGDMESNGKSVQRNGERVTHSTGPIIWGEPGTNGQHAFYQLIHQGQKIIPCDFIASVESHNPLGKHHQILLSNFFAQTEALMKGKNEQEVTNELTKEGLSQEKIKQLLPHKVFEGNRPTNSIFLHKLTPHSLGALIALYEHKIFVQGIIWNINSFDQWGVELGKQLAKSILPELSDNNEVSTHDSSTNGLINFYKSNSKL.

Residue Glu366 is the Proton donor of the active site. Catalysis depends on residues His397 and Lys525.

Belongs to the GPI family.

It is found in the cytoplasm. It carries out the reaction alpha-D-glucose 6-phosphate = beta-D-fructose 6-phosphate. The protein operates within carbohydrate degradation; glycolysis; D-glyceraldehyde 3-phosphate and glycerone phosphate from D-glucose: step 2/4. In Dictyostelium discoideum (Social amoeba), this protein is Glucose-6-phosphate isomerase (gpi).